A 523-amino-acid polypeptide reads, in one-letter code: MTSHIDDNLWIIALTSKCTQENLAWVLLIMGSLWLTMTFYYWSHPGGPAWGKYYTYSPPLSIIPGPKGFPLIGSMGLMTSLAHHRIAAAAATCRAKRLMAFSLGDTRVIVTCHPDVAKEILNSSVFADRPVKESAYSLMFNRAIGFASYGVYWRSLRRIASNHLFCPRQIKASELQRSQIAAQMVHILNNKRHRSLRVRQVLKKASLSNMMCSVFGQEYKLHDPNSGMEDLGILVDQGYDLLGLFNWADHLPFLAHFDAQNIRFRCSNLVPMVNRFVGTIIAEHRASKTETNRDFVDVLLSLPEPDQLSDSDMIAVLWEMIFRGTDTVAVLIEWILARMALHPHVQSKVQEELDAVVGKARAVAEDDVAVMTYLPAVVKEVLRLHPPGPLLSWARLSINDTTIDGYHVPAGTTAMVNTWAICRDPHVWKDPLEFMPERFVTAGGDAEFSILGSDPRLAPFGSGRRACPGKTLGWATVNFWVASLLHEFEWVPSDEKGVDLTEVLKLSSEMANPLTVKVRPRRG.

Cysteine 467 contacts heme.

It belongs to the cytochrome P450 family. Heme is required as a cofactor.

This Glycine max (Soybean) protein is Cytochrome P450 78A3 (CYP78A3).